A 609-amino-acid chain; its full sequence is Glutamine--fructose-6-phosphate aminotransferase [isomerizing] (609 aa).

Cys-2 acts as the Nucleophile; for GATase activity in catalysis. The Glutamine amidotransferase type-2 domain occupies 2-218 (CGIVGAIAQR…EGDIAEITRR (217 aa)). 2 SIS domains span residues 286-426 (ADEL…LKGL) and 458-599 (LAED…VDQP). Lys-604 (for Fru-6P isomerization activity) is an active-site residue.

In terms of assembly, homodimer.

It localises to the cytoplasm. The catalysed reaction is D-fructose 6-phosphate + L-glutamine = D-glucosamine 6-phosphate + L-glutamate. Catalyzes the first step in hexosamine metabolism, converting fructose-6P into glucosamine-6P using glutamine as a nitrogen source. The protein is Glutamine--fructose-6-phosphate aminotransferase [isomerizing] of Escherichia coli O6:H1 (strain CFT073 / ATCC 700928 / UPEC).